Here is a 381-residue protein sequence, read N- to C-terminus: Dual specificity protein phosphatase 6 (381 aa).

The region spanning 30 to 148 (GNEQLLLMDC…FQAEFALHCE (119 aa)) is the Rhodanese domain. A disordered region spans residues 176–203 (SSSDIESDLDRDPNSATDSDGSPLSNSQ). Over residues 189-203 (NSATDSDGSPLSNSQ) the composition is skewed to polar residues. Positions 206 to 349 (FPVEILPFLY…LLDFERTLGL (144 aa)) constitute a Tyrosine-protein phosphatase domain. C293 acts as the Phosphocysteine intermediate in catalysis.

Belongs to the protein-tyrosine phosphatase family. Non-receptor class dual specificity subfamily. Interacts with MAPK1/ERK2. In terms of processing, ubiquitinated by the SCF(FBXO31) complex, leading to its proteasomal degradation. Expressed in lung, heart, brain, and kidney, but not significantly in skeletal muscle or testis.

It localises to the cytoplasm. It catalyses the reaction O-phospho-L-tyrosyl-[protein] + H2O = L-tyrosyl-[protein] + phosphate. The enzyme catalyses O-phospho-L-seryl-[protein] + H2O = L-seryl-[protein] + phosphate. It carries out the reaction O-phospho-L-threonyl-[protein] + H2O = L-threonyl-[protein] + phosphate. In terms of biological role, dual specificity protein phosphatase, which mediates dephosphorylation and inactivation of MAP kinases. Has a specificity for the ERK family. Implicated in muscle and neuronal differentiation. Plays an important role in alleviating chronic postoperative pain. Necessary for the normal dephosphorylation of the long-lasting phosphorylated forms of spinal MAPK1/3 and MAP kinase p38 induced by peripheral surgery, which drives the resolution of acute postoperative allodynia. Also important for dephosphorylation of MAPK1/3 in local wound tissue, which further contributes to resolution of acute pain. This Rattus norvegicus (Rat) protein is Dual specificity protein phosphatase 6 (Dusp6).